Here is a 257-residue protein sequence, read N- to C-terminus: Protein windbeutel (257 aa).

The first 21 residues, 1 to 21 (MMHILVTLLLVAIHSIPTTWA), serve as a signal peptide directing secretion. Positions 24-27 (CTGC) are CXXC motif. Residues 254–257 (KEEL) carry the Prevents secretion from ER motif.

In terms of assembly, homodimer. Interacts with pip; the interaction is direct and does not require pip to be folded. As to expression, briefly expressed in the follicle cells of the ovary, at around the time when the dorsoventral axis of the egg chamber is first established.

The protein localises to the endoplasmic reticulum lumen. Probable chaperone protein involved in dorsoventral axis patterning in early embryos. Probably acts by folding and targeting pipe (pip) into the Golgi. The protein is Protein windbeutel of Drosophila melanogaster (Fruit fly).